The chain runs to 474 residues: Chromosomal replication initiator protein DnaA (474 aa).

The segment at 1–91 is domain I, interacts with DnaA modulators; the sequence is MSEELWQRCL…STRASTPAAS (91 aa). Residues 89-138 form a disordered region; that stretch reads AASYFNGSSSSSSNGPITTPAAAPAPRQPESDSRPQPTSLGGARKHRSNL. A domain II region spans residues 91–136; sequence SYFNGSSSSSSNGPITTPAAAPAPRQPESDSRPQPTSLGGARKHRS. The segment covering 96 to 113 has biased composition (low complexity); it reads SSSSSSNGPITTPAAAPA. The segment at 137–354 is domain III, AAA+ region; the sequence is NLNTGFTFST…GALRRVIAHV (218 aa). 4 residues coordinate ATP: Gly182, Gly184, Lys185, and Thr186. The tract at residues 355–474 is domain IV, binds dsDNA; that stretch reads RFTGAQIDIG…YLNLLRTLTS (120 aa).

This sequence belongs to the DnaA family. Oligomerizes as a right-handed, spiral filament on DNA at oriC.

It is found in the cytoplasm. In terms of biological role, plays an essential role in the initiation and regulation of chromosomal replication. ATP-DnaA binds to the origin of replication (oriC) to initiate formation of the DNA replication initiation complex once per cell cycle. Binds the DnaA box (a 9 base pair repeat at the origin) and separates the double-stranded (ds)DNA. Forms a right-handed helical filament on oriC DNA; dsDNA binds to the exterior of the filament while single-stranded (ss)DNA is stabiized in the filament's interior. The ATP-DnaA-oriC complex binds and stabilizes one strand of the AT-rich DNA unwinding element (DUE), permitting loading of DNA polymerase. After initiation quickly degrades to an ADP-DnaA complex that is not apt for DNA replication. Binds acidic phospholipids. The sequence is that of Chromosomal replication initiator protein DnaA from Alcanivorax borkumensis (strain ATCC 700651 / DSM 11573 / NCIMB 13689 / SK2).